Reading from the N-terminus, the 714-residue chain is MPAAAGDGLLGEPAAPGGGGGAEDAARPAAACEGSFLPAWVSGVPRERLRDFQHHKRVGNYLIGSRKLGEGSFAKVREGLHVLTGEKVAIKVIDKKRAKKDTYVTKNLRREGQIQQMIRHPNITQLLDILETENSYYLVMELCPGGNLMHKIYEKKRLEESEARRYIRQLISAVEHLHRAGVVHRDLKIENLLLDEDNNIKLIDFGLSNCAGILGYSDPFSTQCGSPAYAAPELLARKKYGPKIDVWSIGVNMYAMLTGTLPFTVEPFSLRALYQKMVDKEMNPLPTQLSTGAISFLRSLLEPDPVKRPNIQQALANRWLNENYTGKVPCNVTYPNRISLEDLSPSVVLHMTEKLGYKNSDVINTVLSNRACHILAIYFLLNKKLERYLSGKSDIQDSLCYKTRLYQIEKYRAPKESYEASLDTWTRDLEFHAVQDKKPKEQEKRGDFLHRPFSKKLDKNLPSHKQPSGSLMTQIQNTKALLKDRKASKSSFPDKDSFGCRNIFRKTSDSNCVASSSMEFIPVPPPRTPRIVKKPEPHQPGPGSTGIPHKEDPLMLDMVRSFESVDRDDHVEVLSPSHHYRILNSPVSLARRNSSERTLSPGLPSGSMSPLHTPLHPTLVSFAHEDKNSPPKEEGLCCPPPVPSNGPMQPLGSPNCVKSRGRFPMMGIGQMLRKRHQSLQPSADRPLEASLPPLQPLAPVNLAFDMADGVKTQC.

Low complexity predominate over residues 1 to 15; sequence MPAAAGDGLLGEPAA. A disordered region spans residues 1-26; it reads MPAAAGDGLLGEPAAPGGGGGAEDAA. Positions 62-320 constitute a Protein kinase domain; sequence LIGSRKLGEG…IQQALANRWL (259 aa). Residues 68-76 and Lys-91 each bind ATP; that span reads LGEGSFAKV. Asp-186 acts as the Proton acceptor in catalysis. Residues 437–461 are compositionally biased toward basic and acidic residues; the sequence is KKPKEQEKRGDFLHRPFSKKLDKNL. Disordered stretches follow at residues 437 to 471, 518 to 552, and 590 to 615; these read KKPK…SGSL, MEFI…HKED, and ARRN…HTPL. Over residues 599–611 the composition is skewed to low complexity; that stretch reads LSPGLPSGSMSPL.

This sequence belongs to the protein kinase superfamily. CAMK Ser/Thr protein kinase family. SNF1 subfamily.

It carries out the reaction L-seryl-[protein] + ATP = O-phospho-L-seryl-[protein] + ADP + H(+). The catalysed reaction is L-threonyl-[protein] + ATP = O-phospho-L-threonyl-[protein] + ADP + H(+). This chain is Hormonally up-regulated neu tumor-associated kinase (HUNK), found in Homo sapiens (Human).